Reading from the N-terminus, the 469-residue chain is Serine/threonine-protein kinases PknA (469 aa).

One can recognise a Protein kinase domain in the interval Tyr20 to Val281. Residues Ile26–Val34 and Lys49 contribute to the ATP site. Catalysis depends on Asp148, which acts as the Proton acceptor. 2 disordered regions span residues Arg286–Ser307 and Phe359–Asp454. Composition is skewed to low complexity over residues Glu365–Thr384 and Thr399–Glu413. Polar residues predominate over residues Val430–Ser443.

Belongs to the protein kinase superfamily. Ser/Thr protein kinase family.

It catalyses the reaction L-seryl-[protein] + ATP = O-phospho-L-seryl-[protein] + ADP + H(+). It carries out the reaction L-threonyl-[protein] + ATP = O-phospho-L-threonyl-[protein] + ADP + H(+). The polypeptide is Serine/threonine-protein kinases PknA (pknA) (Corynebacterium glutamicum (strain ATCC 13032 / DSM 20300 / JCM 1318 / BCRC 11384 / CCUG 27702 / LMG 3730 / NBRC 12168 / NCIMB 10025 / NRRL B-2784 / 534)).